Here is a 204-residue protein sequence, read N- to C-terminus: LexA repressor (204 aa).

The H-T-H motif DNA-binding region spans 30 to 50 (IREICQGVGLSSPSTVHHHLK). Active-site for autocatalytic cleavage activity residues include Ser-125 and Lys-162.

This sequence belongs to the peptidase S24 family. In terms of assembly, homodimer.

It catalyses the reaction Hydrolysis of Ala-|-Gly bond in repressor LexA.. Represses a number of genes involved in the response to DNA damage (SOS response), including recA and lexA. In the presence of single-stranded DNA, RecA interacts with LexA causing an autocatalytic cleavage which disrupts the DNA-binding part of LexA, leading to derepression of the SOS regulon and eventually DNA repair. The polypeptide is LexA repressor (Carboxydothermus hydrogenoformans (strain ATCC BAA-161 / DSM 6008 / Z-2901)).